The chain runs to 129 residues: Venom CUB domain-containing protein 1 (129 aa).

A signal peptide spans 1–18; it reads MKLLGVLITIYCIASTLA. The region spanning 19–121 is the CUB domain; it reads IDVNVPSNGM…KASCKAYSIT (103 aa). Cys-66 and Cys-83 form a disulfide bridge.

This sequence belongs to the venom CUB family. Post-translationally, contains 2 disulfide bonds. Expressed by the venom gland.

The protein resides in the secreted. The chain is Venom CUB domain-containing protein 1 from Platymeris rhadamanthus (Red spot assassin bug).